The primary structure comprises 103 residues: Putative membrane protein insertion efficiency factor (103 aa).

Belongs to the UPF0161 family.

Its subcellular location is the cell inner membrane. Its function is as follows. Could be involved in insertion of integral membrane proteins into the membrane. This Chlamydia pneumoniae (Chlamydophila pneumoniae) protein is Putative membrane protein insertion efficiency factor.